The following is a 697-amino-acid chain: MFLKFCLWTMFFFSAWSPIGHAKYSSLLEVVTPLRVTVTRGNNISPGWLSYSLNIGGQRHIITMKPKKNLISRNFLLFTYSDQGDLLEQHHFVQNDCYYHGYVDEDLESPVIVNTCFGSLQGTLEINGTSYEIMPKSSTSTFEHLVYKMDSGDSESSPMRCGLSEEETAQQTKLQESNAPTLLQIPYENWWTHHRFIEYFVVLDHKQYVHRNNNITTCIQDMLQIVNGVNGYYLQIDTDVVLTTLEVWNEKNYINVELSIFKVLGDFCTWKQNMFGNRIRHDIIHLLVRQGYGLYLGLAYLADVCTPYNCGVSSVLSDVMSDMAHIVAHEMGHNFGMKHDGIGCTCGLKDCLMAPYKTNSPKFSNCSYEEMYSVVTKRSCLYDIPEALVTNLTVCGNKVVEEGEQCDCGNSESCLQDPCCSSDCVLKPGAQCAFGLCCKNCQFLKAGTVCRKEKNECDLPEWCNGTSAECPGDVYKADGIPCSGEGYCYKMECHQRDEQCRKIFGNGSRSADEICYMEMNRQGDRFGNCGNDSSTYRTCQIADVLCGQIQCENVIQLPQRRNHETVHYTHFSNITCWTMDYHFGITIDDIGAVSDGTAYAPDHICVDRKCVSKSVLVSNCSPQLYHMQGICNNKQHCHCGVTWKPPDCQKRGHGGSIDSGPPPLPLSHSKWIVYILIVLDVCIVIIIYLFSFYKLSK.

Positions 1 to 22 are cleaved as a signal peptide; that stretch reads MFLKFCLWTMFFFSAWSPIGHA. The propeptide occupies 23 to 187; it reads KYSSLLEVVT…NAPTLLQIPY (165 aa). An N-linked (GlcNAc...) asparagine glycan is attached at N127. The Cysteine switch signature appears at 159–166; sequence MRCGLSEE. Position 161 (C161) interacts with Zn(2+). Residues 188–671 are Extracellular-facing; the sequence is ENWWTHHRFI…PPLPLSHSKW (484 aa). Positions 195–385 constitute a Peptidase M12B domain; it reads RFIEYFVVLD…TKRSCLYDIP (191 aa). Residue N214 is glycosylated (N-linked (GlcNAc...) asparagine). 3 disulfides stabilise this stretch: C305-C380, C344-C366, and C346-C351. H329 contributes to the Zn(2+) binding site. The active site involves E330. The Zn(2+) site is built by H333 and H339. N-linked (GlcNAc...) asparagine glycans are attached at residues N365, N391, N464, N506, N531, and N573. The Disintegrin domain occupies 392 to 478; sequence LTVCGNKVVE…ECPGDVYKAD (87 aa). A disulfide bond links C450 and C470. Residues 616–649 enclose the EGF-like domain; it reads LVSNCSPQLYHMQGICNNKQHCHCGVTWKPPDCQ. Cystine bridges form between C620-C631 and C639-C648. The chain crosses the membrane as a helical span at residues 672–692; sequence IVYILIVLDVCIVIIIYLFSF. The Cytoplasmic portion of the chain corresponds to 693 to 697; the sequence is YKLSK.

Zn(2+) is required as a cofactor. In terms of tissue distribution, expressed in sperm (at protein level). Expressed specifically in testis.

It is found in the membrane. In terms of biological role, sperm surface membrane protein that may be involved in spermatogenesis and fertilization. The chain is Disintegrin and metalloproteinase domain-containing protein 26A from Mus musculus (Mouse).